Reading from the N-terminus, the 257-residue chain is Imidazole glycerol phosphate synthase subunit HisF (257 aa).

Residues Asp-11 and Asp-130 contribute to the active site.

Belongs to the HisA/HisF family. As to quaternary structure, heterodimer of HisH and HisF.

It is found in the cytoplasm. The enzyme catalyses 5-[(5-phospho-1-deoxy-D-ribulos-1-ylimino)methylamino]-1-(5-phospho-beta-D-ribosyl)imidazole-4-carboxamide + L-glutamine = D-erythro-1-(imidazol-4-yl)glycerol 3-phosphate + 5-amino-1-(5-phospho-beta-D-ribosyl)imidazole-4-carboxamide + L-glutamate + H(+). It functions in the pathway amino-acid biosynthesis; L-histidine biosynthesis; L-histidine from 5-phospho-alpha-D-ribose 1-diphosphate: step 5/9. Functionally, IGPS catalyzes the conversion of PRFAR and glutamine to IGP, AICAR and glutamate. The HisF subunit catalyzes the cyclization activity that produces IGP and AICAR from PRFAR using the ammonia provided by the HisH subunit. This chain is Imidazole glycerol phosphate synthase subunit HisF, found in Shewanella sp. (strain MR-4).